The chain runs to 193 residues: Large ribosomal subunit protein uL18 (193 aa).

This sequence belongs to the universal ribosomal protein uL18 family. In terms of assembly, part of the 50S ribosomal subunit. Contacts the 5S and 23S rRNAs.

Functionally, this is one of the proteins that bind and probably mediate the attachment of the 5S RNA into the large ribosomal subunit, where it forms part of the central protuberance. The protein is Large ribosomal subunit protein uL18 of Methanosphaera stadtmanae (strain ATCC 43021 / DSM 3091 / JCM 11832 / MCB-3).